The primary structure comprises 208 residues: V-type ATP synthase subunit D (208 aa).

It belongs to the V-ATPase D subunit family.

Its function is as follows. Produces ATP from ADP in the presence of a proton gradient across the membrane. This Chlamydia abortus (strain DSM 27085 / S26/3) (Chlamydophila abortus) protein is V-type ATP synthase subunit D.